A 383-amino-acid chain; its full sequence is Putative glutamate--cysteine ligase 2-1 (383 aa).

This sequence belongs to the glutamate--cysteine ligase type 2 family. YbdK subfamily.

It carries out the reaction L-cysteine + L-glutamate + ATP = gamma-L-glutamyl-L-cysteine + ADP + phosphate + H(+). Functionally, ATP-dependent carboxylate-amine ligase which exhibits weak glutamate--cysteine ligase activity. The chain is Putative glutamate--cysteine ligase 2-1 from Nocardia farcinica (strain IFM 10152).